A 424-amino-acid polypeptide reads, in one-letter code: Inositol phosphosphingolipids phospholipase C (424 aa).

Glutamate 49 serves as a coordination point for Mg(2+). Histidine 289 functions as the Proton acceptor in the catalytic mechanism. 2 helical membrane passes run 335–357 (LRIA…IAWC) and 364–386 (VIIL…CIGL).

Belongs to the neutral sphingomyelinase family. Mg(2+) is required as a cofactor.

Its subcellular location is the cell membrane. The protein resides in the endoplasmic reticulum membrane. It functions in the pathway lipid metabolism; sphingolipid metabolism. In terms of biological role, inositol phosphosphingolipids phospholipase essential for the coordination of cell wall formation. Responsible for the hydrolysis of the phosphosphingolipids (IPS), inositol phosphorylceramide (IPC), mannosylinositol phosphorylceramide (MIPC), and mannosyldiinositol phosphorylceramide (M(IP)2C). In Schizosaccharomyces pombe (strain 972 / ATCC 24843) (Fission yeast), this protein is Inositol phosphosphingolipids phospholipase C (css1).